A 529-amino-acid polypeptide reads, in one-letter code: Peptide chain release factor 3 (529 aa).

Residues 11–280 form the tr-type G domain; that stretch reads SKRRTFAIIS…GLTDWAPAPL (270 aa). GTP contacts are provided by residues 20-27, 88-92, and 142-145; these read SHPDAGKT, DTPGH, and NKLD.

This sequence belongs to the TRAFAC class translation factor GTPase superfamily. Classic translation factor GTPase family. PrfC subfamily.

Its subcellular location is the cytoplasm. In terms of biological role, increases the formation of ribosomal termination complexes and stimulates activities of RF-1 and RF-2. It binds guanine nucleotides and has strong preference for UGA stop codons. It may interact directly with the ribosome. The stimulation of RF-1 and RF-2 is significantly reduced by GTP and GDP, but not by GMP. This is Peptide chain release factor 3 from Vibrio vulnificus (strain YJ016).